The following is a 532-amino-acid chain: Cytochrome c oxidase subunit 1 (532 aa).

3 consecutive transmembrane segments (helical) span residues methionine 1–alanine 21, leucine 27–valine 47, and glycine 69–phenylalanine 89. Histidine 114 contacts heme b. A run of 8 helical transmembrane segments spans residues threonine 115–valine 135, leucine 143–threonine 163, leucine 185–phenylalanine 205, isoleucine 212–valine 232, glycine 263–valine 283, leucine 296–leucine 316, leucine 328–leucine 348, and methionine 366–isoleucine 386. Cu cation is bound by residues histidine 264, histidine 314, and histidine 315. Positions 402 and 404 each coordinate heme b. 3 helical membrane passes run valine 403–threonine 423, phenylalanine 442–methionine 462, and valine 496–valine 516.

It belongs to the heme-copper respiratory oxidase family. Requires Cu(2+) as cofactor. It depends on heme b as a cofactor.

It is found in the cell membrane. The catalysed reaction is 4 Fe(II)-[cytochrome c] + O2 + 8 H(+)(in) = 4 Fe(III)-[cytochrome c] + 2 H2O + 4 H(+)(out). It participates in energy metabolism; oxidative phosphorylation. Its function is as follows. Cytochrome c oxidase is the component of the respiratory chain that catalyzes the reduction of oxygen to water. Subunits 1-3 form the functional core of the enzyme complex. Co I is the catalytic subunit of the enzyme. Electrons originating in cytochrome c are transferred via the copper A center of subunit 2 and heme a of subunit 1 to the bimetallic center formed by heme a3 and copper B. This cytochrome c oxidase shows proton pump activity across the membrane in addition to the electron transfer. The polypeptide is Cytochrome c oxidase subunit 1 (ctaD) (Rhodobacter capsulatus (Rhodopseudomonas capsulata)).